The following is a 491-amino-acid chain: MSSILSADDLNDFISPGAVCIKPIKVDKTTENAEIEIGAQGQALEVGIDGTQKELEPAQLSLSDCLACSGCITSAESVLVALQSHTQLLDELKKEAELPSGEKRIFVCSVSHQARASFAAAFGVSVEVADAKLHSLLLDTLGFDYVVGMGVGREISLIHSAQEVEKSTQKPVMAASCPGWVCYVEKTHPHVIPYLSSVKSPQQICGSLLKKVICDTRRVKPSQVYHVSVMPCFDKKLEASRDEFSVEEAGQEEKIRDVDCVITTKEVVQLLTEKDMSFGGLPEIDKSRLYTSVPETWPAERDWANHVGSSSGGYLHHVLTALRLRHDPLETRTRVDASMGKNQDVMEYSVIDTETGETVASAAQVYGFRNIQNLVRKLKPSRGKGKVVSARKSTKTVSAALNPSTYSYIEVMACPGGCINGGGQVGAPEGVAAREWKDETEKMYNSIPSEAVSEEVVDWATKVWGPHDEDKLVTAHYQEVEKVDQGLASTW.

Residues Cys-20, Cys-65, Cys-68, Cys-71, Cys-177, Cys-232, Cys-414, and Cys-418 each coordinate [4Fe-4S] cluster.

The protein belongs to the NARF family.

Its function is as follows. Component of the cytosolic Fe/S protein assembly machinery. Required for maturation of extramitochondrial Fe/S proteins. May play a role in the transfer of pre-assembled Fe/S clusters to target apoproteins. The sequence is that of Cytosolic Fe-S cluster assembly factor NAR1 (NAR1) from Yarrowia lipolytica (strain CLIB 122 / E 150) (Yeast).